The following is a 652-amino-acid chain: Acetyl-coenzyme A synthetase (652 aa).

CoA-binding positions include 191–194 and threonine 311; that span reads RAGN. ATP-binding positions include 387–389, 411–416, aspartate 503, and arginine 518; these read GEP and DTWWQT. Serine 526 provides a ligand contact to CoA. Arginine 529 contacts ATP. Valine 540, histidine 542, and valine 545 together coordinate Mg(2+). Arginine 587 contacts CoA. N6-acetyllysine is present on lysine 613.

The protein belongs to the ATP-dependent AMP-binding enzyme family. The cofactor is Mg(2+). Post-translationally, acetylated. Deacetylation by the SIR2-homolog deacetylase activates the enzyme.

The enzyme catalyses acetate + ATP + CoA = acetyl-CoA + AMP + diphosphate. In terms of biological role, catalyzes the conversion of acetate into acetyl-CoA (AcCoA), an essential intermediate at the junction of anabolic and catabolic pathways. AcsA undergoes a two-step reaction. In the first half reaction, AcsA combines acetate with ATP to form acetyl-adenylate (AcAMP) intermediate. In the second half reaction, it can then transfer the acetyl group from AcAMP to the sulfhydryl group of CoA, forming the product AcCoA. This Marinomonas sp. (strain MWYL1) protein is Acetyl-coenzyme A synthetase.